A 209-amino-acid chain; its full sequence is Large ribosomal subunit protein uL3 (209 aa).

The protein belongs to the universal ribosomal protein uL3 family. In terms of assembly, part of the 50S ribosomal subunit. Forms a cluster with proteins L14 and L19.

Its function is as follows. One of the primary rRNA binding proteins, it binds directly near the 3'-end of the 23S rRNA, where it nucleates assembly of the 50S subunit. This is Large ribosomal subunit protein uL3 from Desulfotalea psychrophila (strain LSv54 / DSM 12343).